We begin with the raw amino-acid sequence, 683 residues long: Cytoskeleton-associated protein 2 (683 aa).

2 disordered regions span residues 1–28 (MSTPAVPQDLQLPPSQRAQSAFKEQRRQ) and 153–175 (NSKKKQMTTEKQKQDANMPKKPV). Ser-178 and Ser-190 each carry phosphoserine. Disordered regions lie at residues 214-236 (KATKPQPVNTSSVTVKSNRSSNM) and 336-403 (EKSE…EKPV). The segment covering 219–236 (QPVNTSSVTVKSNRSSNM) has biased composition (polar residues). Basic and acidic residues-rich tracts occupy residues 336–345 (EKSEPVDQRR) and 362–376 (ETSEERKARLSEWKA). Ser-534 bears the Phosphoserine mark. Phosphothreonine is present on residues Thr-579 and Thr-582. Ser-595 is subject to Phosphoserine. 2 positions are modified to phosphothreonine: Thr-596 and Thr-597. Tyr-599 carries the post-translational modification Phosphotyrosine. At Ser-602 the chain carries Phosphoserine.

This sequence belongs to the CKAP2 family. Associates with alpha- and beta-tubulins. As to expression, abundant in testis, thymus, and in tumor derived cell lines, while barely detectable in liver, prostate, and kidney.

It localises to the cytoplasm. Its subcellular location is the cytoskeleton. The protein resides in the spindle. It is found in the spindle pole. Its function is as follows. Possesses microtubule stabilizing properties. Involved in regulating aneuploidy, cell cycling, and cell death in a p53/TP53-dependent manner. The polypeptide is Cytoskeleton-associated protein 2 (Homo sapiens (Human)).